Reading from the N-terminus, the 153-residue chain is RNA-binding protein OPG065 (153 aa).

A Z-binding domain is found at 1–33 (MEKREVNKALYDLQRSAMVYSSNDTPPRWSTTM). Positions 22–34 (SNDTPPRWSTTMD) are enriched in polar residues. The tract at residues 22-44 (SNDTPPRWSTTMDADTRPTDSDA) is disordered. The 68-residue stretch at 80 to 147 (NPVTVINEYC…AKLAVDKLLS (68 aa)) folds into the DRBM domain.

This sequence belongs to the orthopoxvirus OPG065 family. Interacts with host G1P2/ISG15. Interacts with host EIF2AK2/PKR. Interacts with host ZBP1.

Its function is as follows. RNA-binding protein that plays a role in the inhibition of multiple cellular antiviral responses activated by double-stranded RNA (dsRNA), such as inhibition of PKR activation, necroptosis, and IFN-mediated antiviral activities. Recognizes and binds Z-RNA structures via its Z-binding domain and dsRNA via its DRBM domain: RNA-binding activity is required to escape host ZBP1-dependent necroptosis. Mechanistically, the Z-binding domain binds Z-RNAs that are produced during vaccinia virus infection, thereby competing with Z-RNA detection by host ZBP1, suppressing ZBP1-dependent necroptosis. Acts as a key inhibitor of the interferon response by blocking the phosphorylation and subsequent activation of IRF3 and IRF7 kinases that are required for interferon-alpha gene expression. Inhibits NF-kappa-B activation and the ubiquitin-like protein ISG15, which is an early antiviral protein. The binding with host ISG15 subsequently blocks host ISGylation. This Monkeypox virus protein is RNA-binding protein OPG065 (OPG065).